A 525-amino-acid chain; its full sequence is Membrane-bound lytic murein transglycosylase F (525 aa).

A signal peptide spans 1–24 (MQIRHFNRLKRSVLLFASVLLLSA). The tract at residues 25 to 284 (CQIESQPKSE…SLEEKYIGHI (260 aa)) is non-LT domain. Residues 286–525 (AFDYVDTRAF…VDEDLDQEEE (240 aa)) form an LT domain region. The active site involves Glu329. Positions 506-525 (VSGASDITNEVDEDLDQEEE) are disordered. The span at 514 to 525 (NEVDEDLDQEEE) shows a compositional bias: acidic residues.

This sequence in the N-terminal section; belongs to the bacterial solute-binding protein 3 family. In the C-terminal section; belongs to the transglycosylase Slt family.

It is found in the cell outer membrane. The catalysed reaction is Exolytic cleavage of the (1-&gt;4)-beta-glycosidic linkage between N-acetylmuramic acid (MurNAc) and N-acetylglucosamine (GlcNAc) residues in peptidoglycan, from either the reducing or the non-reducing ends of the peptidoglycan chains, with concomitant formation of a 1,6-anhydrobond in the MurNAc residue.. Murein-degrading enzyme that degrades murein glycan strands and insoluble, high-molecular weight murein sacculi, with the concomitant formation of a 1,6-anhydromuramoyl product. Lytic transglycosylases (LTs) play an integral role in the metabolism of the peptidoglycan (PG) sacculus. Their lytic action creates space within the PG sacculus to allow for its expansion as well as for the insertion of various structures such as secretion systems and flagella. The chain is Membrane-bound lytic murein transglycosylase F from Vibrio parahaemolyticus serotype O3:K6 (strain RIMD 2210633).